The following is a 443-amino-acid chain: Glutamate-1-semialdehyde 2,1-aminomutase (443 aa).

K281 carries the post-translational modification N6-(pyridoxal phosphate)lysine.

The protein belongs to the class-III pyridoxal-phosphate-dependent aminotransferase family. HemL subfamily. In terms of assembly, homodimer. Pyridoxal 5'-phosphate serves as cofactor.

It localises to the cytoplasm. It catalyses the reaction (S)-4-amino-5-oxopentanoate = 5-aminolevulinate. Its pathway is porphyrin-containing compound metabolism; protoporphyrin-IX biosynthesis; 5-aminolevulinate from L-glutamyl-tRNA(Glu): step 2/2. This Leptospira interrogans serogroup Icterohaemorrhagiae serovar Lai (strain 56601) protein is Glutamate-1-semialdehyde 2,1-aminomutase.